Reading from the N-terminus, the 197-residue chain is Small ribosomal subunit protein uS4c (197 aa).

The region spanning 84 to 143 is the S4 RNA-binding domain; sequence MRLDNIIFQLGMASTIPAARQLVCHRHILVNHRVVDIPSYRCKPRDIISIRNRPTSANAL.

Belongs to the universal ribosomal protein uS4 family. As to quaternary structure, part of the 30S ribosomal subunit. Contacts protein S5. The interaction surface between S4 and S5 is involved in control of translational fidelity.

The protein localises to the plastid. It is found in the chloroplast. One of the primary rRNA binding proteins, it binds directly to 16S rRNA where it nucleates assembly of the body of the 30S subunit. Functionally, with S5 and S12 plays an important role in translational accuracy. The protein is Small ribosomal subunit protein uS4c (rps4) of Adiantum capillus-veneris (Maidenhair fern).